A 132-amino-acid chain; its full sequence is Small ribosomal subunit protein uS8c (132 aa).

This sequence belongs to the universal ribosomal protein uS8 family. In terms of assembly, part of the 30S ribosomal subunit.

The protein localises to the plastid. The protein resides in the chloroplast. In terms of biological role, one of the primary rRNA binding proteins, it binds directly to 16S rRNA central domain where it helps coordinate assembly of the platform of the 30S subunit. The chain is Small ribosomal subunit protein uS8c (rps8) from Amborella trichopoda.